The primary structure comprises 94 residues: Small ubiquitin-related modifier 3 (94 aa).

Lysine 11 participates in a covalent cross-link: Glycyl lysine isopeptide (Lys-Gly) (interchain with G-Cter in SUMO). A Ubiquitin-like domain is found at 15 to 92 (DHINLKVAGQ…IDVFQQQTGG (78 aa)). A Glycyl lysine isopeptide (Gly-Lys) (interchain with K-? in acceptor proteins) cross-link involves residue glycine 92. The propeptide occupies 93 to 94 (VC).

The protein belongs to the ubiquitin family. SUMO subfamily. Interacts with sae2 and ube2i. Covalently attached to a number of proteins. Polymeric chains can be formed through Lys-11 cross-linking. Post-translationally, cleavage of precursor form by a sentrin-specific protease is necessary for function.

It localises to the cytoplasm. Its subcellular location is the nucleus. It is found in the PML body. Ubiquitin-like protein which can be covalently attached to target lysines either as a monomer or as a lysine-linked polymer. Does not seem to be involved in protein degradation and may function as an antagonist of ubiquitin in the degradation process. Plays a role in a number of cellular processes such as nuclear transport, DNA replication and repair, mitosis and signal transduction. Covalent attachment to its substrates requires prior activation by the E1 complex sae1-sae2 and linkage to the E2 enzyme ube2i. In Xenopus laevis (African clawed frog), this protein is Small ubiquitin-related modifier 3 (sumo3).